The primary structure comprises 226 residues: Endonuclease V (226 aa).

Asp-43 and Asp-108 together coordinate Mg(2+).

It belongs to the endonuclease V family. The cofactor is Mg(2+).

It is found in the cytoplasm. The enzyme catalyses Endonucleolytic cleavage at apurinic or apyrimidinic sites to products with a 5'-phosphate.. Functionally, DNA repair enzyme involved in the repair of deaminated bases. Selectively cleaves double-stranded DNA at the second phosphodiester bond 3' to a deoxyinosine leaving behind the intact lesion on the nicked DNA. The chain is Endonuclease V from Thermosipho melanesiensis (strain DSM 12029 / CIP 104789 / BI429).